A 622-amino-acid chain; its full sequence is Serine/threonine-protein kinase PknB (622 aa).

At 1–328 (MTTPPHLSDR…TESDGSIGRW (328 aa)) the chain is on the cytoplasmic side. One can recognise a Protein kinase domain in the interval 11 to 273 (YELGDILGFG…TAAEMRADLI (263 aa)). Residues 17 to 25 (LGFGGMSEV), Lys40, and 93 to 95 (EYV) each bind ATP. The Proton acceptor role is filled by Asp138. Residues 140-143 (KPAN) and Asp156 contribute to the ATP site. Asn143 and Asp156 together coordinate Mg(2+). Residues Ser166 and Ser168 each carry the phosphoserine; by autocatalysis modification. Residues Thr170, Thr172, and Thr308 each carry the phosphothreonine; by autocatalysis modification. A helical transmembrane segment spans residues 329 to 349 (VAVVAVLAVLTIAIVAAFNTF). Residues 350–622 (GGNTRDVQVP…DGIITLKFGQ (273 aa)) are Extracellular-facing. PASTA domains follow at residues 352 to 418 (NTRD…NVST), 419 to 486 (GPEQ…IVGS), 487 to 553 (GPET…QVSK), and 554 to 622 (GNQF…KFGQ). Residues 381–404 (RTLQKPDSTIPPDHVISTEPGANA) are disordered.

The protein belongs to the protein kinase superfamily. Ser/Thr protein kinase family. Homodimer. Post-translationally, autophosphorylated. Dephosphorylated by PstP.

It localises to the cell membrane. The catalysed reaction is L-seryl-[protein] + ATP = O-phospho-L-seryl-[protein] + ADP + H(+). It catalyses the reaction L-threonyl-[protein] + ATP = O-phospho-L-threonyl-[protein] + ADP + H(+). In terms of biological role, protein kinase that regulates many aspects of mycobacterial physiology. Is a key component of a signal transduction pathway that regulates cell growth, cell shape and cell division via phosphorylation of target proteins. In Mycobacterium leprae (strain TN), this protein is Serine/threonine-protein kinase PknB (pknB).